A 51-amino-acid chain; its full sequence is uncharacterized protein (51 aa).

This is an uncharacterized protein from Enterobacteria phage T4 (Bacteriophage T4).